Consider the following 347-residue polypeptide: Hyaluronidase conohyal-ad1 (347 aa).

The first 18 residues, 1-18 (MRAVVVVTGLVVVVVTTT), serve as a signal peptide directing secretion. The propeptide occupies 19–33 (LSLQDHDVKSASSPL). A disordered region spans residues 27-49 (KSASSPLSSSVDQGSSGDDCDEG). The span at 28-43 (SASSPLSSSVDQGSSG) shows a compositional bias: low complexity. A disulfide bridge links Cys67 with Cys343. Glu150 acts as the Proton donor in catalysis.

It belongs to the glycosyl hydrolase 56 family. In terms of processing, contains 4 disulfide bonds. Is N-linked glycosylated at three positions. As to expression, expressed by the venom duct.

It is found in the secreted. The catalysed reaction is Random hydrolysis of (1-&gt;4)-linkages between N-acetyl-beta-D-glucosamine and D-glucuronate residues in hyaluronate.. Functionally, hyaluronidase catalyzes the hydrolysis of hyaluronic acid (HA), an anionic, nonsulfated glycosaminoglycan distributed widely throughout connective, epithelial, and neural tissues. In venom, they are known to enhance diffusion of the venom by degrading the extracellular matrix. This is Hyaluronidase conohyal-ad1 from Conus adamsonii (Rhododendron cone).